The chain runs to 222 residues: GTP cyclohydrolase 1 (222 aa).

Zn(2+) contacts are provided by Cys-111, His-114, and Cys-182.

The protein belongs to the GTP cyclohydrolase I family. In terms of assembly, toroid-shaped homodecamer, composed of two pentamers of five dimers.

It catalyses the reaction GTP + H2O = 7,8-dihydroneopterin 3'-triphosphate + formate + H(+). Its pathway is cofactor biosynthesis; 7,8-dihydroneopterin triphosphate biosynthesis; 7,8-dihydroneopterin triphosphate from GTP: step 1/1. Allosteric enzyme. Activity is modulated by K(+), divalent cations, UTP, and tetrahydrobiopterin. Tetrahydrobiopterin is an inhibitor of this enzyme. The chain is GTP cyclohydrolase 1 from Salmonella typhi.